Here is a 252-residue protein sequence, read N- to C-terminus: Trans-aconitate 2-methyltransferase (252 aa).

Belongs to the methyltransferase superfamily. Tam family.

It localises to the cytoplasm. It catalyses the reaction trans-aconitate + S-adenosyl-L-methionine = (E)-3-(methoxycarbonyl)pent-2-enedioate + S-adenosyl-L-homocysteine. Functionally, catalyzes the S-adenosylmethionine monomethyl esterification of trans-aconitate. This Shigella dysenteriae serotype 1 (strain Sd197) protein is Trans-aconitate 2-methyltransferase.